The following is a 352-amino-acid chain: Photosystem II D2 protein (352 aa).

Threonine 2 is modified (N-acetylthreonine). Threonine 2 carries the phosphothreonine modification. Residues 40–60 (CAYFALGGWLTGTTFVTSWYT) traverse the membrane as a helical segment. Residue histidine 117 participates in chlorophyll a binding. The helical transmembrane segment at 124–140 (GFMLRQFEIARAVKIRP) threads the bilayer. Positions 129 and 142 each coordinate pheophytin a. The chain crosses the membrane as a helical span at residues 152-165 (VFVSVFLIYPLGQA). Histidine 197 lines the chlorophyll a pocket. The helical transmembrane segment at 207–227 (AALLCAIHGATVENTLFEDGD) threads the bilayer. A plastoquinone-binding residues include histidine 214 and phenylalanine 261. Histidine 214 serves as a coordination point for Fe cation. Residue histidine 268 coordinates Fe cation. A helical membrane pass occupies residues 278-294 (GLWMSALGVVGLALNLR).

Belongs to the reaction center PufL/M/PsbA/D family. In terms of assembly, PSII is composed of 1 copy each of membrane proteins PsbA, PsbB, PsbC, PsbD, PsbE, PsbF, PsbH, PsbI, PsbJ, PsbK, PsbL, PsbM, PsbT, PsbX, PsbY, PsbZ, Psb30/Ycf12, at least 3 peripheral proteins of the oxygen-evolving complex and a large number of cofactors. It forms dimeric complexes. The D1/D2 heterodimer binds P680, chlorophylls that are the primary electron donor of PSII, and subsequent electron acceptors. It shares a non-heme iron and each subunit binds pheophytin, quinone, additional chlorophylls, carotenoids and lipids. There is also a Cl(-1) ion associated with D1 and D2, which is required for oxygen evolution. The PSII complex binds additional chlorophylls, carotenoids and specific lipids. is required as a cofactor.

It is found in the plastid. The protein resides in the chloroplast thylakoid membrane. The enzyme catalyses 2 a plastoquinone + 4 hnu + 2 H2O = 2 a plastoquinol + O2. Photosystem II (PSII) is a light-driven water:plastoquinone oxidoreductase that uses light energy to abstract electrons from H(2)O, generating O(2) and a proton gradient subsequently used for ATP formation. It consists of a core antenna complex that captures photons, and an electron transfer chain that converts photonic excitation into a charge separation. The D1/D2 (PsbA/PsbD) reaction center heterodimer binds P680, the primary electron donor of PSII as well as several subsequent electron acceptors. D2 is needed for assembly of a stable PSII complex. The protein is Photosystem II D2 protein of Tupiella akineta (Green alga).